Consider the following 274-residue polypeptide: MASISPYGKRFISYLRREQIRRLLATKYRVDGRGPEQTRNVEINVGVVKTADGSAEVKLGKTHVVAGVKVGLGQPFPDAPDEGVLVVNAEVLPHASPYTEVGPPDEFAIELARVVDRGIRHCGYVDFKKLAVEGGKAYVLWIDLYVINDDGNLIDVANLASVAALKNTQLPVVVKDEAGVVKLDRNNKAPLPVDISKAPIAVSVGKIGNVLFLDPTFEEELSLDGRITFTFSEDKIVAAQKTLGYFTQSEIEAALNLALRGRDRLLEALKSALK.

The protein belongs to the RNase PH family. Rrp42 subfamily. Component of the archaeal exosome complex. Forms a hexameric ring-like arrangement composed of 3 Rrp41-Rrp42 heterodimers. The hexameric ring associates with a trimer of Rrp4 and/or Csl4 subunits.

It localises to the cytoplasm. Non-catalytic component of the exosome, which is a complex involved in RNA degradation. Contributes to the structuring of the Rrp41 active site. The protein is Exosome complex component Rrp42 of Pyrobaculum aerophilum (strain ATCC 51768 / DSM 7523 / JCM 9630 / CIP 104966 / NBRC 100827 / IM2).